A 250-amino-acid chain; its full sequence is Probable transcriptional regulatory protein Rxyl_1318 (250 aa).

It belongs to the TACO1 family.

It is found in the cytoplasm. The polypeptide is Probable transcriptional regulatory protein Rxyl_1318 (Rubrobacter xylanophilus (strain DSM 9941 / JCM 11954 / NBRC 16129 / PRD-1)).